We begin with the raw amino-acid sequence, 125 residues long: UPF0231 protein in hemN 3'region (125 aa).

Belongs to the UPF0231 family.

The polypeptide is UPF0231 protein in hemN 3'region (Mannheimia haemolytica (Pasteurella haemolytica)).